The chain runs to 60 residues: UPF0434 protein HCH_02705 (60 aa).

Belongs to the UPF0434 family.

This chain is UPF0434 protein HCH_02705, found in Hahella chejuensis (strain KCTC 2396).